The chain runs to 132 residues: Mediator of RNA polymerase II transcription subunit 11 (132 aa).

This sequence belongs to the Mediator complex subunit 11 family. Component of the Mediator complex.

Its subcellular location is the nucleus. In terms of biological role, component of the Mediator complex, a coactivator involved in the regulated transcription of nearly all RNA polymerase II-dependent genes. Mediator functions as a bridge to convey information from gene-specific regulatory proteins to the basal RNA polymerase II transcription machinery. Mediator is recruited to promoters by direct interactions with regulatory proteins and serves as a scaffold for theQ9P086 assembly of a functional pre-initiation complex with RNA polymerase II and the general transcription factors. This Aedes aegypti (Yellowfever mosquito) protein is Mediator of RNA polymerase II transcription subunit 11 (MED11).